The chain runs to 116 residues: MKNTNLPEETKEPISPGSSHRKQNKTGTKTCFPETTVLSGRDRLKRHREEVAGKVPIPDSWGKEGLLMGWMDFSTFDAAFTSSQIVSARAALMADSGDDAGARGSRPQRLRVESSC.

2 disordered regions span residues 1–33 (MKNT…TCFP) and 95–116 (DSGD…ESSC).

Its subcellular location is the nucleus. Regulates the blue-light dependent dimerization of CRY2 and formation of photobodies. Inhibits CRY phosphorylation. The sequence is that of Protein BIC2 from Arabidopsis thaliana (Mouse-ear cress).